A 470-amino-acid polypeptide reads, in one-letter code: MASRRQWGAGAGAVDVPAQERKGGKAATDHLLRAFFAVFFVLEGLSWRRRRRRDGEGVFLLRYVACLLCLQAAKIARRPKTTTVVAQQPPRIRRALADVSNLVNGRAALPVVNRQKAAAAAADKCRKPIKQRNENNKAAKPEVIVISSDSEKHKKNPAQRAASRRAPIQTLTSILTKCSRASDGVISPKKELIYDIDASDSHNELAVVDYVEDIYRFYRNTENTYRPLCTYMVSQTEINERMRAILTDWLIEVHYRLMLMPETLYLTVYIIDQYLSLENVPRKELQLVGVSAMLIACKYEETWAPLVKDFLVISDNSFSRQQVLSTEKSILNKLQWNLTVPTMYMFILRYLKAALGDEELEHMTFFYAELALVQYSMLFFAPSVIAAAAVYAARCTLGLSPLWSDLLEYHTGLAEPQLLECARRLVSLHAAAPESRQKVVYKKYASPKLGAVSLHSPAKKLLPPPSPVAA.

It belongs to the cyclin family. Cyclin AB subfamily.

In Oryza sativa subsp. japonica (Rice), this protein is Cyclin-B1-3 (CYCB1-3).